A 321-amino-acid chain; its full sequence is Probable arabinan endo-1,5-alpha-L-arabinosidase A (321 aa).

The N-terminal stretch at 1 to 19 is a signal peptide; the sequence is MHPSTFVTTIACLAGLAHG. The Proton acceptor role is filled by Asp34. Glu200 acts as the Proton donor in catalysis.

It belongs to the glycosyl hydrolase 43 family.

It localises to the secreted. It catalyses the reaction Endohydrolysis of (1-&gt;5)-alpha-arabinofuranosidic linkages in (1-&gt;5)-arabinans.. Its pathway is glycan metabolism; L-arabinan degradation. In terms of biological role, endo-1,5-alpha-L-arabinanase involved in degradation of pectin. Its preferred substrate is linear 1,5-alpha-L-arabinan. The protein is Probable arabinan endo-1,5-alpha-L-arabinosidase A (abnA) of Aspergillus clavatus (strain ATCC 1007 / CBS 513.65 / DSM 816 / NCTC 3887 / NRRL 1 / QM 1276 / 107).